Reading from the N-terminus, the 25-residue chain is Chitinolytic alpha-amylase inhibitor PvCAI (25 aa).

As to quaternary structure, homodimer.

The enzyme catalyses Random endo-hydrolysis of N-acetyl-beta-D-glucosaminide (1-&gt;4)-beta-linkages in chitin and chitodextrins.. Its function is as follows. Alpha-amylase inhibitor, active against Z.subfasciatus alpha-amylase (ZSA) but not porcine pancreatic alpha-amylase (PPA). Has chitinase activity. This is Chitinolytic alpha-amylase inhibitor PvCAI from Phaseolus vulgaris (Kidney bean).